Here is a 592-residue protein sequence, read N- to C-terminus: Syntaxin-binding protein 3 (592 aa).

Residues 1 to 255 (MAPPVSERGL…STVLHELTFQ (255 aa)) are mediates interaction with DOC2B.

Belongs to the STXBP/unc-18/SEC1 family. In terms of assembly, interacts with STX4. Interacts with DOC2B; the interaction is direct, occurs at the cell membrane, excludes interaction with STX4 and regulates glucose-stimulated insulin secretion. Post-translationally, phosphorylated by PKC in platelets in response to thrombin stimulation; phosphorylation inhibits binding to STX4. In terms of tissue distribution, ubiquitously expressed in all tissues tested.

It is found in the cytoplasm. The protein resides in the cytosol. Its subcellular location is the cell membrane. Functionally, together with STX4 and VAMP2, may play a role in insulin-dependent movement of GLUT4 and in docking/fusion of intracellular GLUT4-containing vesicles with the cell surface in adipocytes. The chain is Syntaxin-binding protein 3 (Stxbp3) from Mus musculus (Mouse).